The following is a 500-amino-acid chain: NAD(P)H-quinone oxidoreductase chain 4, chloroplastic (500 aa).

14 helical membrane-spanning segments follow: residues 4-24 (FPWLTLIVVLPISAGSLIFFL), 37-57 (IFICMLELLLTTYVFCYHFQL), 87-107 (IGPILLTGFITTLATLAAWPV), 113-130 (LFHFLMLAMYSGQIGSFS), 134-154 (LLLFFIMWELELIPVYLLLSM), 167-187 (FILYTAGGSIFLLLGVLGIGL), 208-228 (ALEIIFYIGFFIAFAVKSPII), 242-262 (HYSTCMLLAGILLKMGAYGLV), 272-292 (AHSIFSPWLVVVGTMQIIYAA), 305-325 (IAYSSVSHMGFIIIGIGSITD), 330-350 (GAILQIISHGFLGAALFFLAG), 386-406 (LALPGMSGFVAELIVFFGIIT), 416-436 (ILITFVMAIGMILTPIYSLSM), and 462-482 (LFVLISIFLPVIGIGIYPDFV).

Belongs to the complex I subunit 4 family.

Its subcellular location is the plastid. The protein resides in the chloroplast thylakoid membrane. The catalysed reaction is a plastoquinone + NADH + (n+1) H(+)(in) = a plastoquinol + NAD(+) + n H(+)(out). The enzyme catalyses a plastoquinone + NADPH + (n+1) H(+)(in) = a plastoquinol + NADP(+) + n H(+)(out). This is NAD(P)H-quinone oxidoreductase chain 4, chloroplastic from Vitis vinifera (Grape).